Reading from the N-terminus, the 89-residue chain is Small ribosomal subunit protein eS25A (89 aa).

It belongs to the eukaryotic ribosomal protein eS25 family. As to quaternary structure, component of the small ribosomal subunit (SSU). Mature yeast ribosomes consist of a small (40S) and a large (60S) subunit. The 40S small subunit contains 1 molecule of ribosomal RNA (18S rRNA) and at least 33 different proteins. The large 60S subunit contains 3 rRNA molecules (25S, 5.8S and 5S rRNA) and at least 46 different proteins.

Its subcellular location is the cytoplasm. Its function is as follows. Component of the ribosome, a large ribonucleoprotein complex responsible for the synthesis of proteins in the cell. The small ribosomal subunit (SSU) binds messenger RNAs (mRNAs) and translates the encoded message by selecting cognate aminoacyl-transfer RNA (tRNA) molecules. The large subunit (LSU) contains the ribosomal catalytic site termed the peptidyl transferase center (PTC), which catalyzes the formation of peptide bonds, thereby polymerizing the amino acids delivered by tRNAs into a polypeptide chain. The nascent polypeptides leave the ribosome through a tunnel in the LSU and interact with protein factors that function in enzymatic processing, targeting, and the membrane insertion of nascent chains at the exit of the ribosomal tunnel. In Schizosaccharomyces pombe (strain 972 / ATCC 24843) (Fission yeast), this protein is Small ribosomal subunit protein eS25A (rps2502).